The following is a 229-amino-acid chain: 1-Cys peroxiredoxin PER1 (229 aa).

A Thioredoxin domain is found at 4 to 173 (LTIGDTVPNL…VLRAVDSLLT (170 aa)). Cysteine 46 serves as the catalytic Cysteine sulfenic acid (-SOH) intermediate. The Bipartite nuclear localization signal signature appears at 205–228 (RKMFPQGFETADLPSKKGYLRFTK).

Belongs to the peroxiredoxin family. Prx6 subfamily.

Its subcellular location is the nucleus. It is found in the cytoplasm. The enzyme catalyses a hydroperoxide + [thioredoxin]-dithiol = an alcohol + [thioredoxin]-disulfide + H2O. Its function is as follows. Thiol-specific peroxidase that catalyzes the reduction of hydrogen peroxide and organic hydroperoxides to water and alcohols, respectively. Seems to contribute to the inhibition of germination during stress. In Zea mays (Maize), this protein is 1-Cys peroxiredoxin PER1 (PER1).